A 392-amino-acid polypeptide reads, in one-letter code: DNA-directed RNA polymerase subunit Rpo1C (392 aa).

The protein belongs to the RNA polymerase beta' chain family. In terms of assembly, part of the RNA polymerase complex.

The protein localises to the cytoplasm. It catalyses the reaction RNA(n) + a ribonucleoside 5'-triphosphate = RNA(n+1) + diphosphate. Its function is as follows. DNA-dependent RNA polymerase (RNAP) catalyzes the transcription of DNA into RNA using the four ribonucleoside triphosphates as substrates. Forms part of the jaw domain. The chain is DNA-directed RNA polymerase subunit Rpo1C from Saccharolobus islandicus (strain Y.N.15.51 / Yellowstone #2) (Sulfolobus islandicus).